The chain runs to 666 residues: UvrABC system protein B (666 aa).

The Helicase ATP-binding domain maps to 25–412; the sequence is NGIKNNNKWQ…SENIAEQVIR (388 aa). Position 38–45 (38–45) interacts with ATP; it reads GVTGSGKT. The short motif at 91 to 114 is the Beta-hairpin element; it reads YYDYYQPEAYVAQTDTYIEKDASI. The 167-residue stretch at 429-595 folds into the Helicase C-terminal domain; the sequence is QIDDLYSEIK…TIKKAVRDVI (167 aa). The UVR domain occupies 622–657; the sequence is DKLIKEFEKEMKEAAKELQFEKAAYFRDKVNELKKK.

The protein belongs to the UvrB family. In terms of assembly, forms a heterotetramer with UvrA during the search for lesions. Interacts with UvrC in an incision complex.

It localises to the cytoplasm. In terms of biological role, the UvrABC repair system catalyzes the recognition and processing of DNA lesions. A damage recognition complex composed of 2 UvrA and 2 UvrB subunits scans DNA for abnormalities. Upon binding of the UvrA(2)B(2) complex to a putative damaged site, the DNA wraps around one UvrB monomer. DNA wrap is dependent on ATP binding by UvrB and probably causes local melting of the DNA helix, facilitating insertion of UvrB beta-hairpin between the DNA strands. Then UvrB probes one DNA strand for the presence of a lesion. If a lesion is found the UvrA subunits dissociate and the UvrB-DNA preincision complex is formed. This complex is subsequently bound by UvrC and the second UvrB is released. If no lesion is found, the DNA wraps around the other UvrB subunit that will check the other stand for damage. The sequence is that of UvrABC system protein B from Clostridium acetobutylicum (strain ATCC 824 / DSM 792 / JCM 1419 / IAM 19013 / LMG 5710 / NBRC 13948 / NRRL B-527 / VKM B-1787 / 2291 / W).